The sequence spans 589 residues: DNA mismatch repair protein MutL (589 aa).

Disordered regions lie at residues 330 to 355 and 374 to 394; these read LQRR…SHRE and RIYE…SEPT. The span at 331 to 341 shows a compositional bias: basic and acidic residues; it reads QRREAPQRPEP. The span at 381–390 shows a compositional bias: pro residues; sequence PYRPPEPPAA.

The protein belongs to the DNA mismatch repair MutL/HexB family.

This protein is involved in the repair of mismatches in DNA. It is required for dam-dependent methyl-directed DNA mismatch repair. May act as a 'molecular matchmaker', a protein that promotes the formation of a stable complex between two or more DNA-binding proteins in an ATP-dependent manner without itself being part of a final effector complex. The sequence is that of DNA mismatch repair protein MutL from Trichlorobacter lovleyi (strain ATCC BAA-1151 / DSM 17278 / SZ) (Geobacter lovleyi).